The chain runs to 372 residues: Glutamate 5-kinase (372 aa).

Residue K14 participates in ATP binding. 3 residues coordinate substrate: S54, D141, and N153. ATP is bound at residue 173-174 (TD). Residues 280–358 (RGTLVLDDGA…DAIEALLGYV (79 aa)) enclose the PUA domain.

The protein belongs to the glutamate 5-kinase family.

Its subcellular location is the cytoplasm. It carries out the reaction L-glutamate + ATP = L-glutamyl 5-phosphate + ADP. It functions in the pathway amino-acid biosynthesis; L-proline biosynthesis; L-glutamate 5-semialdehyde from L-glutamate: step 1/2. Functionally, catalyzes the transfer of a phosphate group to glutamate to form L-glutamate 5-phosphate. The sequence is that of Glutamate 5-kinase from Pseudomonas aeruginosa (strain UCBPP-PA14).